Here is a 430-residue protein sequence, read N- to C-terminus: 3-phosphoshikimate 1-carboxyvinyltransferase (430 aa).

The 3-phosphoshikimate site is built by K21, S22, and R26. Position 21 (K21) interacts with phosphoenolpyruvate. Phosphoenolpyruvate-binding residues include G94 and R122. Positions 167, 169, 317, and 344 each coordinate 3-phosphoshikimate. A phosphoenolpyruvate-binding site is contributed by Q169. The active-site Proton acceptor is D317. R348 and R390 together coordinate phosphoenolpyruvate.

This sequence belongs to the EPSP synthase family. As to quaternary structure, monomer.

Its subcellular location is the cytoplasm. The enzyme catalyses 3-phosphoshikimate + phosphoenolpyruvate = 5-O-(1-carboxyvinyl)-3-phosphoshikimate + phosphate. Its pathway is metabolic intermediate biosynthesis; chorismate biosynthesis; chorismate from D-erythrose 4-phosphate and phosphoenolpyruvate: step 6/7. Catalyzes the transfer of the enolpyruvyl moiety of phosphoenolpyruvate (PEP) to the 5-hydroxyl of shikimate-3-phosphate (S3P) to produce enolpyruvyl shikimate-3-phosphate and inorganic phosphate. The chain is 3-phosphoshikimate 1-carboxyvinyltransferase from Thermodesulfovibrio yellowstonii (strain ATCC 51303 / DSM 11347 / YP87).